A 59-amino-acid chain; its full sequence is Mitochondrial sheath formation-associated protein (59 aa).

Over 1–6 the chain is Mitochondrial intermembrane; that stretch reads MIVLGW. The next 2 helical transmembrane spans lie at 2–22 and 7–23; these read IVLG…FPEL and MFFV…PELM. At 24-40 the chain is on the cytoplasmic side; it reads PPTLKWQERWPVQESKT.

As to quaternary structure, interacts with VDAC3.

The protein localises to the mitochondrion outer membrane. Its function is as follows. Regulates sperm development. May be involved in mitochondrial sheath formation. The sequence is that of Mitochondrial sheath formation-associated protein from Homo sapiens (Human).